Here is a 1097-residue protein sequence, read N- to C-terminus: uncharacterized protein (1097 aa).

A coiled-coil region spans residues 31-1087 (LLNVARQEEE…TALNKLRTRH (1057 aa)).

Belongs to the TRAFAC class myosin-kinesin ATPase superfamily. Myosin family. Specifically expressed in muscles of the head including temporalis and tensor veli palatini.

Its function is as follows. Has most probably lost the function in masticatory muscles contraction suspected for its homologs in dog (AC F1PT61) and apes. This is an uncharacterized protein from Homo sapiens (Human).